Reading from the N-terminus, the 118-residue chain is Large ribosomal subunit protein bL20 (118 aa).

The protein belongs to the bacterial ribosomal protein bL20 family.

Its function is as follows. Binds directly to 23S ribosomal RNA and is necessary for the in vitro assembly process of the 50S ribosomal subunit. It is not involved in the protein synthesizing functions of that subunit. The sequence is that of Large ribosomal subunit protein bL20 from Francisella tularensis subsp. holarctica (strain FTNF002-00 / FTA).